Here is a 421-residue protein sequence, read N- to C-terminus: UDP-N-acetylglucosamine 1-carboxyvinyltransferase (421 aa).

A phosphoenolpyruvate-binding site is contributed by K22–N23. R93 is a binding site for UDP-N-acetyl-alpha-D-glucosamine. C117 functions as the Proton donor in the catalytic mechanism. Residue C117 is modified to 2-(S-cysteinyl)pyruvic acid O-phosphothioketal. Residues R122–L126, D308, and I330 contribute to the UDP-N-acetyl-alpha-D-glucosamine site.

This sequence belongs to the EPSP synthase family. MurA subfamily.

It localises to the cytoplasm. The catalysed reaction is phosphoenolpyruvate + UDP-N-acetyl-alpha-D-glucosamine = UDP-N-acetyl-3-O-(1-carboxyvinyl)-alpha-D-glucosamine + phosphate. It functions in the pathway cell wall biogenesis; peptidoglycan biosynthesis. Its function is as follows. Cell wall formation. Adds enolpyruvyl to UDP-N-acetylglucosamine. In Pseudomonas fluorescens (strain SBW25), this protein is UDP-N-acetylglucosamine 1-carboxyvinyltransferase.